The chain runs to 801 residues: Elongation factor G, mitochondrial (801 aa).

A mitochondrion-targeting transit peptide spans 1–65; the sequence is MRVQSLLRAQ…QKIQNQRRWQ (65 aa). Positions 100 to 387 constitute a tr-type G domain; sequence SRVRNIGIAA…AVCDYLPNPS (288 aa). Residues 109–116, 185–189, and 239–242 each bind GTP; these read AHIDSGKT, DTPGH, and NKMD.

Belongs to the TRAFAC class translation factor GTPase superfamily. Classic translation factor GTPase family. EF-G/EF-2 subfamily.

Its subcellular location is the mitochondrion. It functions in the pathway protein biosynthesis; polypeptide chain elongation. Its function is as follows. Mitochondrial GTPase that catalyzes the GTP-dependent ribosomal translocation step during translation elongation. During this step, the ribosome changes from the pre-translocational (PRE) to the post-translocational (POST) state as the newly formed A-site-bound peptidyl-tRNA and P-site-bound deacylated tRNA move to the P and E sites, respectively. Catalyzes the coordinated movement of the two tRNA molecules, the mRNA and conformational changes in the ribosome. In Pyrenophora tritici-repentis (strain Pt-1C-BFP) (Wheat tan spot fungus), this protein is Elongation factor G, mitochondrial (mef1).